A 424-amino-acid chain; its full sequence is Tyrosine--tRNA ligase (424 aa).

Residue Tyr-37 participates in L-tyrosine binding. The 'HIGH' region signature appears at 42–51; it reads PTADSLHLGH. Residues Tyr-175 and Gln-179 each contribute to the L-tyrosine site. Positions 235–239 match the 'KMSKS' region motif; it reads KFGKT. ATP is bound at residue Lys-238. Residues 357 to 414 form the S4 RNA-binding domain; that stretch reads ADLQQALVNAELVPSRGQARTMISSNAVAINGEKQSDPEYAFTDADRLFGRYTLLRRG.

Belongs to the class-I aminoacyl-tRNA synthetase family. TyrS type 1 subfamily. Homodimer.

It is found in the cytoplasm. It catalyses the reaction tRNA(Tyr) + L-tyrosine + ATP = L-tyrosyl-tRNA(Tyr) + AMP + diphosphate + H(+). Catalyzes the attachment of tyrosine to tRNA(Tyr) in a two-step reaction: tyrosine is first activated by ATP to form Tyr-AMP and then transferred to the acceptor end of tRNA(Tyr). The protein is Tyrosine--tRNA ligase of Yersinia enterocolitica serotype O:8 / biotype 1B (strain NCTC 13174 / 8081).